A 488-amino-acid chain; its full sequence is GlcNAc-binding protein A (488 aa).

Residues 1–24 (MIMIITKKTLLPVTLALFSSGVMA) form the signal peptide. The Chitin-binding type-4 domain occupies 25 to 202 (HGYVSSVEGG…SFYNVIDVMF (178 aa)). The Chitin-binding type-3 domain maps to 439–480 (AGSKVLATDGRIYECKPFPYSGYCIQWSPSATQFEPGVGSDW).

This sequence belongs to the GbpA family.

It is found in the secreted. Probably interacts with GlcNAc residues. May promote attachment to both epithelial cell surfaces and chitin. The polypeptide is GlcNAc-binding protein A (Photobacterium profundum (strain SS9)).